The following is a 325-amino-acid chain: Thiamine-monophosphate kinase (325 aa).

Mg(2+) contacts are provided by Asp27 and Asp44. Residue His51 coordinates substrate. Residue Asp73 participates in Mg(2+) binding. ATP-binding positions include Tyr103, 120–121, and Arg147; that span reads GD. Position 121 (Asp121) interacts with Mg(2+). Residue Asp215 coordinates Mg(2+). Residue Ser217 participates in ATP binding. Asp218 serves as a coordination point for Mg(2+). The substrate site is built by Glu264 and Tyr321.

Belongs to the thiamine-monophosphate kinase family.

The catalysed reaction is thiamine phosphate + ATP = thiamine diphosphate + ADP. It functions in the pathway cofactor biosynthesis; thiamine diphosphate biosynthesis; thiamine diphosphate from thiamine phosphate: step 1/1. Its function is as follows. Catalyzes the ATP-dependent phosphorylation of thiamine-monophosphate (TMP) to form thiamine-pyrophosphate (TPP), the active form of vitamin B1. This chain is Thiamine-monophosphate kinase, found in Bacillus subtilis (strain 168).